The primary structure comprises 472 residues: Gamma-glutamylputrescine synthetase PuuA (472 aa).

Residues 35 to 129 (PNTQYVDVLL…MLLTMVDEDG (95 aa)) enclose the GS beta-grasp domain. The region spanning 136 to 472 (PRNVLNRLWQ…TEIEWMLKNA (337 aa)) is the GS catalytic domain.

It belongs to the glutamine synthetase family. As to quaternary structure, dodecamer. Mg(2+) is required as a cofactor. Mn(2+) serves as cofactor.

The catalysed reaction is putrescine + L-glutamate + ATP = gamma-L-glutamylputrescine + ADP + phosphate + H(+). It functions in the pathway amine and polyamine degradation; putrescine degradation; 4-aminobutanoate from putrescine: step 1/4. Involved in the breakdown of putrescine. Catalyzes the ATP-dependent gamma-glutamylation of putrescine, producing gamma-L-glutamylputrescine. Absolutely essential to utilize putrescine as both nitrogen and carbon sources and to decrease the toxicity of putrescine, which can lead to inhibition of cell growth and protein synthesis. In vitro is also able to use several diamines, and spermidine and spermine, instead of putrescine, but with a much lower activity, and cannot catalyze the gamma-glutamylation of ornithine or GABA. The chain is Gamma-glutamylputrescine synthetase PuuA from Escherichia coli (strain K12).